Consider the following 268-residue polypeptide: Indole-3-glycerol phosphate synthase 2 (268 aa).

The protein belongs to the TrpC family.

The enzyme catalyses 1-(2-carboxyphenylamino)-1-deoxy-D-ribulose 5-phosphate + H(+) = (1S,2R)-1-C-(indol-3-yl)glycerol 3-phosphate + CO2 + H2O. The protein operates within amino-acid biosynthesis; L-tryptophan biosynthesis; L-tryptophan from chorismate: step 4/5. This Ralstonia nicotianae (strain ATCC BAA-1114 / GMI1000) (Ralstonia solanacearum) protein is Indole-3-glycerol phosphate synthase 2 (trpC2).